A 165-amino-acid chain; its full sequence is MRLAAFVLVAVAFAIIPDGRVSAAALGPPESSEGTHEKARLLRLNAVPQPVETGNQEERTINFASIKKIVPGTSAFKNAQALKASQKAALKAQDAAKRKAAVDKWFKQFESDEFLFTAAFPSWVRKKMHPDKVREYFASLGKSGDDVSMIVKRYDNYRQTIPTKK.

Positions 1–23 (MRLAAFVLVAVAFAIIPDGRVSA) are cleaved as a signal peptide. Positions 40 to 59 (RLLRLNAVPQPVETGNQEER) match the RxLR-dEER motif.

Belongs to the RxLR effector family.

It localises to the secreted. The protein resides in the host cell. Functionally, effector that is involved in host plant infection. Contributes to virulence during the early infection stage, by inhibiting plant defense responses induced by both PAMP-triggered immunity (PTI) and effector-triggered immunity (ETI). The chain is RxLR effector protein CRE12 from Phytophthora infestans (strain T30-4) (Potato late blight agent).